Here is a 164-residue protein sequence, read N- to C-terminus: Lipoprotein signal peptidase (164 aa).

3 helical membrane-spanning segments follow: residues 12–32 (WLWL…LILQ), 70–90 (WFFA…MYRS), and 102–122 (ALII…GFVV). Active-site residues include Asp-123 and Asp-141. Residues 137–157 (FNLADTAICVGAALIVLEGFL) traverse the membrane as a helical segment.

Belongs to the peptidase A8 family.

It is found in the cell inner membrane. It carries out the reaction Release of signal peptides from bacterial membrane prolipoproteins. Hydrolyzes -Xaa-Yaa-Zaa-|-(S,diacylglyceryl)Cys-, in which Xaa is hydrophobic (preferably Leu), and Yaa (Ala or Ser) and Zaa (Gly or Ala) have small, neutral side chains.. The protein operates within protein modification; lipoprotein biosynthesis (signal peptide cleavage). Functionally, this protein specifically catalyzes the removal of signal peptides from prolipoproteins. This chain is Lipoprotein signal peptidase, found in Escherichia coli O9:H4 (strain HS).